The following is a 181-amino-acid chain: MDSHQELSAGSPISYDFLDPDWCFKRYLTKDALHSIETGKGAAYFVPDGFTPILIPNSQSYLLDGNSAQLPRPQPISFTLDQCKVPGYILKSLRKDTTSTERTPRPPNAFILYRKEKHATLLKSNPSINNSQVSKLVGEMWRNESKEVRMRYFKMSEFYKAQHQKMYPGYKYQPRKNKVKR.

The HMG box DNA-binding region spans 103 to 171; that stretch reads TPRPPNAFIL…QHQKMYPGYK (69 aa).

It localises to the nucleus. It is found in the cytoplasm. The protein resides in the cytoskeleton. The protein localises to the microtubule organizing center. Its subcellular location is the spindle pole body. Functionally, mating type proteins are sequence specific DNA-binding proteins that act as master switches in yeast differentiation by controlling gene expression in a cell type-specific fashion. Positive regulator of MFM genes. The HMG box recognizes the DNA sequence 5'-AACAAAG-3'. Required for conjugation and efficient meiosis. The protein is Mating-type M-specific polypeptide Mc (mat3-Mc) of Schizosaccharomyces pombe (Fission yeast).